The following is a 107-amino-acid chain: Large ribosomal subunit protein uL24 (107 aa).

This sequence belongs to the universal ribosomal protein uL24 family. As to quaternary structure, part of the 50S ribosomal subunit.

Functionally, one of two assembly initiator proteins, it binds directly to the 5'-end of the 23S rRNA, where it nucleates assembly of the 50S subunit. Its function is as follows. One of the proteins that surrounds the polypeptide exit tunnel on the outside of the subunit. This is Large ribosomal subunit protein uL24 from Carboxydothermus hydrogenoformans (strain ATCC BAA-161 / DSM 6008 / Z-2901).